A 154-amino-acid chain; its full sequence is 17 kDa A-type inclusion protein (154 aa).

Residues 17 to 85 are a coiled coil; that stretch reads QKDCSDKLDR…YKRELERDRY (69 aa). Residues 88–154 form a disordered region; the sequence is SRYLTSSSDP…DVEPEHPPAF (67 aa).

This chain is 17 kDa A-type inclusion protein, found in Bos taurus (Bovine).